Reading from the N-terminus, the 265-residue chain is Capsule polysaccharide export inner-membrane protein BexB (265 aa).

A run of 6 helical transmembrane segments spans residues 37 to 57, 64 to 84, 118 to 138, 151 to 171, 178 to 198, and 235 to 255; these read IGFF…VMMW, KFST…AMMW, LLEV…LVMI, LIAW…ICAI, FGKI…AFFF, and ESIG…LVMV. In terms of domain architecture, ABC transmembrane type-2 spans 37–258; the sequence is IGFFWLFVEP…LLGLVMVKNF (222 aa).

It belongs to the ABC-2 integral membrane protein family.

The protein resides in the cell inner membrane. May form an ATP-driven capsule polysaccharide export apparatus, in association with the BexA, BexC and BexD proteins. In Haemophilus influenzae, this protein is Capsule polysaccharide export inner-membrane protein BexB (bexB).